We begin with the raw amino-acid sequence, 627 residues long: Ski protein homolog (627 aa).

Over residues 1–12 (MSDSPIGSSQQV) the composition is skewed to polar residues. Disordered regions lie at residues 1 to 22 (MSDSPIGSSQQVEPEHRTPDLM), 34 to 58 (LHEETRSDDDDDGQPSTSAKRKDSR), and 299 to 318 (EYDEAAPHQAPPKRPAMETP).

This sequence belongs to the SKI family. In terms of assembly, may interact with daf-3. In terms of tissue distribution, expressed in ganglia in the head and tail and in the anterior pharynx.

The protein localises to the nucleus. Probable component of transcriptional regulatory complex with SMAD protein daf-3. Required to regulate entry into a developmentally arrested larval state known as dauer, in response to harsh environmental conditions. Involved in larvae undergoing cell-cycle arrest during the dauer stage. The sequence is that of Ski protein homolog from Caenorhabditis elegans.